A 171-amino-acid polypeptide reads, in one-letter code: Sec-independent protein translocase protein TatB (171 aa).

Residues 1-21 form a helical membrane-spanning segment; the sequence is MFDIGFSELLLVFIIGLVVLG. The tract at residues 89-171 is disordered; it reads AESMKRSYVA…APSPSSSDKP (83 aa). The span at 100–123 shows a compositional bias: basic and acidic residues; sequence DPEKASDEAHTIHNPVVKDNETAH. Over residues 130 to 139 the composition is skewed to polar residues; the sequence is AAQTQASSPE.

Belongs to the TatB family. In terms of assembly, the Tat system comprises two distinct complexes: a TatABC complex, containing multiple copies of TatA, TatB and TatC subunits, and a separate TatA complex, containing only TatA subunits. Substrates initially bind to the TatABC complex, which probably triggers association of the separate TatA complex to form the active translocon.

Its subcellular location is the cell inner membrane. Functionally, part of the twin-arginine translocation (Tat) system that transports large folded proteins containing a characteristic twin-arginine motif in their signal peptide across membranes. Together with TatC, TatB is part of a receptor directly interacting with Tat signal peptides. TatB may form an oligomeric binding site that transiently accommodates folded Tat precursor proteins before their translocation. The protein is Sec-independent protein translocase protein TatB of Escherichia coli O1:K1 / APEC.